Reading from the N-terminus, the 304-residue chain is Bifunctional protein FolD 3 (304 aa).

NADP(+)-binding positions include 172–174 (GRS), Ser197, and Ile238.

The protein belongs to the tetrahydrofolate dehydrogenase/cyclohydrolase family. As to quaternary structure, homodimer.

The enzyme catalyses (6R)-5,10-methylene-5,6,7,8-tetrahydrofolate + NADP(+) = (6R)-5,10-methenyltetrahydrofolate + NADPH. The catalysed reaction is (6R)-5,10-methenyltetrahydrofolate + H2O = (6R)-10-formyltetrahydrofolate + H(+). The protein operates within one-carbon metabolism; tetrahydrofolate interconversion. Its function is as follows. Catalyzes the oxidation of 5,10-methylenetetrahydrofolate to 5,10-methenyltetrahydrofolate and then the hydrolysis of 5,10-methenyltetrahydrofolate to 10-formyltetrahydrofolate. This is Bifunctional protein FolD 3 from Rhizorhabdus wittichii (strain DSM 6014 / CCUG 31198 / JCM 15750 / NBRC 105917 / EY 4224 / RW1) (Sphingomonas wittichii).